Consider the following 374-residue polypeptide: Alcohol dehydrogenase class-3 (374 aa).

A2 is modified (N-acetylalanine). Positions 45, 67, 97, 100, 103, 111, and 174 each coordinate Zn(2+). K233 carries the post-translational modification N6-succinyllysine. S247 is subject to Phosphoserine. K315 carries the post-translational modification N6-succinyllysine. S324 is modified (phosphoserine).

This sequence belongs to the zinc-containing alcohol dehydrogenase family. Class-III subfamily. Homodimer. It depends on Zn(2+) as a cofactor.

Its subcellular location is the cytoplasm. The enzyme catalyses a primary alcohol + NAD(+) = an aldehyde + NADH + H(+). The catalysed reaction is a secondary alcohol + NAD(+) = a ketone + NADH + H(+). It carries out the reaction S-(hydroxymethyl)glutathione + NADP(+) = S-formylglutathione + NADPH + H(+). It catalyses the reaction S-(hydroxymethyl)glutathione + NAD(+) = S-formylglutathione + NADH + H(+). The enzyme catalyses 20-oxo-(5Z,8Z,11Z,14Z)-eicosatetraenoate + NAD(+) + H2O = (5Z,8Z,11Z,14Z)-eicosatetraenedioate + NADH + 2 H(+). The catalysed reaction is 20-hydroxy-(5Z,8Z,11Z,14Z)-eicosatetraenoate + NAD(+) = 20-oxo-(5Z,8Z,11Z,14Z)-eicosatetraenoate + NADH + H(+). It carries out the reaction S-nitrosoglutathione + NADH + H(+) = S-(hydroxysulfenamide)glutathione + NAD(+). In terms of biological role, catalyzes the oxidation of long-chain primary alcohols and the oxidation of S-(hydroxymethyl) glutathione. Also oxidizes long chain omega-hydroxy fatty acids, such as 20-HETE, producing both the intermediate aldehyde, 20-oxoarachidonate and the end product, a dicarboxylic acid, (5Z,8Z,11Z,14Z)-eicosatetraenedioate. Class-III ADH is remarkably ineffective in oxidizing ethanol. Required for clearance of cellular formaldehyde, a cytotoxic and carcinogenic metabolite that induces DNA damage. Also acts as a S-nitroso-glutathione reductase by catalyzing the NADH-dependent reduction of S-nitrosoglutathione, thereby regulating protein S-nitrosylation. The protein is Alcohol dehydrogenase class-3 of Bos taurus (Bovine).